The sequence spans 551 residues: Protein GPR107 (551 aa).

Residues 1-33 form the signal peptide; it reads MAVPVPLGRFGSFCLRLLRLLALLELLVHPVLG. The Extracellular portion of the chain corresponds to 40–262; it reads LKDDVRHKVH…YLSAGEIPLP (223 aa). N-linked (GlcNAc...) asparagine glycosylation is found at N64 and N209. C106 and C226 are oxidised to a cystine. Residues 263–283 traverse the membrane as a helical segment; that stretch reads KLYVSMALFFFLSGTIWIHIL. Topologically, residues 284–292 are cytoplasmic; the sequence is RKRRNDVFK. Residues 293-313 form a helical membrane-spanning segment; it reads IHWLMAALPFTKSLSLVFHAI. Topologically, residues 314–336 are extracellular; the sequence is DYHYISSQGFPIEGWAVVYYITH. A helical transmembrane segment spans residues 337-357; the sequence is LLKGALLFITIALIGTGWAFI. Topologically, residues 358 to 367 are cytoplasmic; that stretch reads KHILSDKDKK. The helical transmembrane segment at 368–388 threads the bilayer; that stretch reads IFMIVIPLQVLANVAYIIIES. Residues 389–401 are Extracellular-facing; it reads TEEGTTEYGLWKD. A helical transmembrane segment spans residues 402–422; sequence SLFLVDLLCCGAILFPVVWSI. At 423 to 449 the chain is on the cytoplasmic side; the sequence is RHLQEASATDGKAAINLAKLRLFRHYY. Residues 450–470 traverse the membrane as a helical segment; it reads VLIVCYIYFTRIIAFLLKFAV. The Extracellular portion of the chain corresponds to 471-475; it reads PFQWK. A helical membrane pass occupies residues 476–495; sequence WLYQLLDETATLVFFVLTGY. Over 496 to 551 the chain is Cytoplasmic; sequence KFRPASDNPYLQLSQEDDDLEMESVVTTSGVMENMKKVKKVSNGAVEPQGSWEGTA. A Phosphoserine modification is found at S537.

The protein belongs to the LU7TM family. In terms of processing, cleaved by FURIN to yield two fragments that remain associated via a disulfide bond.

The protein resides in the cell membrane. It is found in the golgi apparatus. It localises to the trans-Golgi network membrane. Functionally, has been proposed to act as a receptor for neuronostatin, a peptide derived from the somatostatin/SST precursor. Involved in blood sugar regulation through the induction of glucagon in response to low glucose. The protein is Protein GPR107 (Gpr107) of Mus musculus (Mouse).